A 73-amino-acid chain; its full sequence is Protein SlyX homolog (73 aa).

This sequence belongs to the SlyX family.

In Histophilus somni (strain 129Pt) (Haemophilus somnus), this protein is Protein SlyX homolog.